The chain runs to 115 residues: Hydrogenase maturation factor HypA (115 aa).

Histidine 2 is a binding site for Ni(2+). 4 residues coordinate Zn(2+): cysteine 73, cysteine 76, cysteine 89, and cysteine 92.

Belongs to the HypA/HybF family.

Involved in the maturation of [NiFe] hydrogenases. Required for nickel insertion into the metal center of the hydrogenase. The polypeptide is Hydrogenase maturation factor HypA (Shewanella halifaxensis (strain HAW-EB4)).